Reading from the N-terminus, the 3133-residue chain is Probable polyketide synthase 38 (3133 aa).

The Ketosynthase family 3 (KS3) domain maps to Asp-9–Glu-440. Catalysis depends on for beta-ketoacyl synthase activity residues Cys-181, His-320, and His-363. The interval Gly-647 to Tyr-680 is acyl/malonyl transferase. Residue Ser-657 is the For acyl/malonyl transferase activity of the active site. Positions Gly-945–Ile-1067 are N-terminal hotdog fold. One can recognise a PKS/mFAS DH domain in the interval Gly-945–Ser-1248. Residue His-979 is the Proton acceptor; for dehydratase activity of the active site. The C-terminal hotdog fold stretch occupies residues Asn-1083–Ser-1248. Asp-1155 (proton donor; for dehydratase activity) is an active-site residue. The interval Asn-1370 to Asn-1408 is disordered. Residues Asn-2562 to His-2639 enclose the Carrier domain. An O-(pantetheine 4'-phosphoryl)serine modification is found at Ser-2599. Residues Asn-2649–Asn-2711 adopt a coiled-coil conformation. 2 disordered regions span residues Leu-2691–Asn-2715 and Gly-2794–Gln-2817. Composition is skewed to low complexity over residues Asn-2692–Asn-2715 and Asn-2795–Gln-2817.

Pantetheine 4'-phosphate is required as a cofactor.

In terms of biological role, probable polyketide synthase. In Dictyostelium discoideum (Social amoeba), this protein is Probable polyketide synthase 38 (pks38).